Reading from the N-terminus, the 417-residue chain is Putative transporter AmpG 1 (417 aa).

12 helical membrane passes run 7–27 (LCII…TGNT), 42–62 (IGIL…APIF), 78–98 (LSWI…FSFL), 104–124 (LLLF…QDTI), 143–163 (GIYI…AIYL), 171–191 (EIYK…IVGI), 225–245 (ALKP…LVLY), 273–293 (VGKF…GVIM), 301–321 (SIFL…FLEI), 328–348 (LLFI…TAYI), 366–386 (FLSS…GYMV), and 389–409 (FGWQ…LLIL).

It belongs to the major facilitator superfamily.

Its subcellular location is the cell inner membrane. This chain is Putative transporter AmpG 1 (ampG1), found in Rickettsia conorii (strain ATCC VR-613 / Malish 7).